The following is a 513-amino-acid chain: Steroid (22S)-hydroxylase (513 aa).

Residues 8 to 28 (TLLPLLLLPSLLSLLLFLILL) traverse the membrane as a helical segment. The interval 252-277 (DIKEEDQEEEEVKTEDEAEMSKSDHV) is disordered. Residues 254–269 (KEEDQEEEEVKTEDEA) are compositionally biased toward acidic residues. Residue cysteine 462 coordinates heme.

This sequence belongs to the cytochrome P450 family. Heme is required as a cofactor. As to expression, expressed in stems, leaves, shoots, and roots, with a higher expression in siliques and apical shoots.

The protein resides in the membrane. The enzyme catalyses a C27-steroid + reduced [NADPH--hemoprotein reductase] + O2 = a (22S)-22-hydroxy C27-steroid + oxidized [NADPH--hemoprotein reductase] + H2O + H(+). It carries out the reaction a C28-steroid + reduced [NADPH--hemoprotein reductase] + O2 = a (22S)-22-hydroxy C28-steroid + oxidized [NADPH--hemoprotein reductase] + H2O + H(+). The catalysed reaction is a C29-steroid + reduced [NADPH--hemoprotein reductase] + O2 = a (22S)-22-hydroxy C29-steroid + oxidized [NADPH--hemoprotein reductase] + H2O + H(+). It catalyses the reaction cholesterol + reduced [NADPH--hemoprotein reductase] + O2 = (22S)-22-hydroxycholesterol + oxidized [NADPH--hemoprotein reductase] + H2O + H(+). The enzyme catalyses cholestanol + reduced [NADPH--hemoprotein reductase] + O2 = (22S)-22-hydroxycholestanol + oxidized [NADPH--hemoprotein reductase] + H2O + H(+). It carries out the reaction campestanol + reduced [NADPH--hemoprotein reductase] + O2 = 6-deoxycathasterone + oxidized [NADPH--hemoprotein reductase] + H2O + H(+). The catalysed reaction is campesterol + reduced [NADPH--hemoprotein reductase] + O2 = (22S)-22-hydroxycampesterol + oxidized [NADPH--hemoprotein reductase] + H2O + H(+). It catalyses the reaction 6-oxocampestanol + reduced [NADPH--hemoprotein reductase] + O2 = cathasterone + oxidized [NADPH--hemoprotein reductase] + H2O + H(+). The enzyme catalyses sitosterol + reduced [NADPH--hemoprotein reductase] + O2 = (22S)-22-hydroxysitosterol + oxidized [NADPH--hemoprotein reductase] + H2O + H(+). The protein operates within plant hormone biosynthesis; brassinosteroid biosynthesis. Its function is as follows. Catalyzes the C22-alpha-hydroxylation step in brassinosteroids biosynthesis. Converts campesterol (CR) to (22S)-22-hydroxycampesterol (22-OHCR, 22-hydroxyCR), campestanol (CN) to 6-deoxycathasterone (6-deoxoCT), and 6-oxocampestanol (6-oxoCN) to cathasterone (CT). Can also use cholesterol and cholestanol as substrates. This Arabidopsis thaliana (Mouse-ear cress) protein is Steroid (22S)-hydroxylase.